Reading from the N-terminus, the 247-residue chain is MRRDYTLYLFAALGTFLIAYIAVPIAVIFLKQASDVEMLVKTLHDPYVIEAIRNSLLTATATALIALLFGVPLGYVLARKDFPGKSAVQALVDVPIVIPHSVVGIMLLVTFSNSILDSYKGIVAAMLFVSAPFTINAARDGFLAVDEKLEAVARTLGASRWRAFLSISLPMAFPSIASGAIMTWARAISEVGAILIVAYYPKTAQVLILEYFNNYGLRASRPIAVIMVSLSLGIFVILRWLVGRKNA.

Topologically, residues 1-8 (MRRDYTLY) are cytoplasmic. Residues 9 to 29 (LFAALGTFLIAYIAVPIAVIF) traverse the membrane as a helical segment. At 30–55 (LKQASDVEMLVKTLHDPYVIEAIRNS) the chain is on the extracellular side. An ABC transmembrane type-1 domain is found at 52-238 (IRNSLLTATA…SLSLGIFVIL (187 aa)). A helical membrane pass occupies residues 56-76 (LLTATATALIALLFGVPLGYV). Residues 77-90 (LARKDFPGKSAVQA) are Cytoplasmic-facing. A helical membrane pass occupies residues 91-111 (LVDVPIVIPHSVVGIMLLVTF). Topologically, residues 112–114 (SNS) are extracellular. The chain crosses the membrane as a helical span at residues 115–135 (ILDSYKGIVAAMLFVSAPFTI). At 136–163 (NAARDGFLAVDEKLEAVARTLGASRWRA) the chain is on the cytoplasmic side. A helical membrane pass occupies residues 164-184 (FLSISLPMAFPSIASGAIMTW). Topologically, residues 185–222 (ARAISEVGAILIVAYYPKTAQVLILEYFNNYGLRASRP) are extracellular. A helical transmembrane segment spans residues 223–243 (IAVIMVSLSLGIFVILRWLVG). At 244–247 (RKNA) the chain is on the cytoplasmic side.

Belongs to the binding-protein-dependent transport system permease family. As to quaternary structure, the complex is composed of two ATP-binding proteins (WtpC), two transmembrane proteins (WtpB) and a solute-binding protein (WtpA).

Its subcellular location is the cell membrane. Its function is as follows. Part of the ABC transporter complex WtpABC involved in molybdate/tungstate import. Probably responsible for the translocation of the substrate across the membrane. This is Molybdate/tungstate transport system permease protein WtpB (wtpB) from Thermococcus kodakarensis (strain ATCC BAA-918 / JCM 12380 / KOD1) (Pyrococcus kodakaraensis (strain KOD1)).